We begin with the raw amino-acid sequence, 449 residues long: Bifunctional protein GlmU (449 aa).

The interval 1–229 is pyrophosphorylase; the sequence is MKLSAVILAA…EEDIYGINDR (229 aa). UDP-N-acetyl-alpha-D-glucosamine contacts are provided by residues 8-11, lysine 22, glutamine 73, and 78-79; these read LAAG and GT. Mg(2+) is bound at residue aspartate 102. Positions 139, 154, 169, and 227 each coordinate UDP-N-acetyl-alpha-D-glucosamine. Residue asparagine 227 coordinates Mg(2+). Residues 230 to 250 form a linker region; the sequence is VQLAQAENILRQRKNRELMLS. Positions 251–449 are N-acetyltransferase; sequence GVSLMDPAST…AGQKHLPRKG (199 aa). Residues arginine 332 and lysine 350 each coordinate UDP-N-acetyl-alpha-D-glucosamine. Histidine 362 (proton acceptor) is an active-site residue. Positions 365 and 376 each coordinate UDP-N-acetyl-alpha-D-glucosamine. Acetyl-CoA-binding positions include alanine 379, 385–386, serine 404, alanine 422, and arginine 439; that span reads NY.

The protein in the N-terminal section; belongs to the N-acetylglucosamine-1-phosphate uridyltransferase family. In the C-terminal section; belongs to the transferase hexapeptide repeat family. As to quaternary structure, homotrimer. Mg(2+) is required as a cofactor.

Its subcellular location is the cytoplasm. The enzyme catalyses alpha-D-glucosamine 1-phosphate + acetyl-CoA = N-acetyl-alpha-D-glucosamine 1-phosphate + CoA + H(+). The catalysed reaction is N-acetyl-alpha-D-glucosamine 1-phosphate + UTP + H(+) = UDP-N-acetyl-alpha-D-glucosamine + diphosphate. It participates in nucleotide-sugar biosynthesis; UDP-N-acetyl-alpha-D-glucosamine biosynthesis; N-acetyl-alpha-D-glucosamine 1-phosphate from alpha-D-glucosamine 6-phosphate (route II): step 2/2. The protein operates within nucleotide-sugar biosynthesis; UDP-N-acetyl-alpha-D-glucosamine biosynthesis; UDP-N-acetyl-alpha-D-glucosamine from N-acetyl-alpha-D-glucosamine 1-phosphate: step 1/1. It functions in the pathway bacterial outer membrane biogenesis; LPS lipid A biosynthesis. In terms of biological role, catalyzes the last two sequential reactions in the de novo biosynthetic pathway for UDP-N-acetylglucosamine (UDP-GlcNAc). The C-terminal domain catalyzes the transfer of acetyl group from acetyl coenzyme A to glucosamine-1-phosphate (GlcN-1-P) to produce N-acetylglucosamine-1-phosphate (GlcNAc-1-P), which is converted into UDP-GlcNAc by the transfer of uridine 5-monophosphate (from uridine 5-triphosphate), a reaction catalyzed by the N-terminal domain. The protein is Bifunctional protein GlmU of Syntrophomonas wolfei subsp. wolfei (strain DSM 2245B / Goettingen).